The chain runs to 260 residues: Glutamate racemase (260 aa).

Substrate is bound by residues 14–15 and 46–47; these read DS and YG. C77 functions as the Proton donor/acceptor in the catalytic mechanism. Substrate is bound at residue 78–79; sequence NT. The active-site Proton donor/acceptor is C188. Residue 189-190 coordinates substrate; sequence TH.

The protein belongs to the aspartate/glutamate racemases family.

It carries out the reaction L-glutamate = D-glutamate. It participates in cell wall biogenesis; peptidoglycan biosynthesis. Provides the (R)-glutamate required for cell wall biosynthesis. The polypeptide is Glutamate racemase (Clostridium perfringens (strain ATCC 13124 / DSM 756 / JCM 1290 / NCIMB 6125 / NCTC 8237 / Type A)).